Consider the following 80-residue polypeptide: Cytochrome c oxidase subunit 7A1, mitochondrial (80 aa).

The N-terminal 21 residues, 1-21, are a transit peptide targeting the mitochondrion; sequence MRALRVSQALVRSFSSTARNR. The Mitochondrial matrix segment spans residues 22 to 46; sequence FENRVAEKQKLFQEDNGLPVHLKGG. The chain crosses the membrane as a helical span at residues 47–75; sequence ATDNILYRVTMTLCLGGTLYSLYCLGWAS. Over 76-80 the chain is Mitochondrial intermembrane; that stretch reads FPHKK.

It belongs to the cytochrome c oxidase VIIa family. Component of the complex IV (CIV, cytochrome c oxidase), a multisubunit enzyme composed of 14 subunits. The complex is composed of a catalytic core of 3 subunits MT-CO1, MT-CO2 and MT-CO3, encoded in the mitochondrial DNA, and 11 supernumerary subunits COX4I1 (or COX4I2), COX5A, COX5B, COX6A2 (or COX6A1), COX6B1 (or COX6B2), COX6C, COX7A1 (or COX7A2), COX7B, COX7C, COX8B and NDUFA4, which are encoded in the nuclear genome. The complex exists as a monomer or a dimer and forms supercomplexes (SCs) in the inner mitochondrial membrane with NADH-ubiquinone oxidoreductase (complex I, CI) and ubiquinol-cytochrome c oxidoreductase (cytochrome b-c1 complex, complex III, CIII), resulting in different assemblies (supercomplex SCI(1)III(2)IV(1) and megacomplex MCI(2)III(2)IV(2)).

It localises to the mitochondrion inner membrane. It functions in the pathway energy metabolism; oxidative phosphorylation. Functionally, component of the mitochondrial respiratory complex IV (CIV, also named cytochrome c oxidase complex), the last enzyme in the mitochondrial electron transport chain which drives oxidative phosphorylation. The CIV complex is the component of the respiratory chain that catalyzes the reduction of oxygen to water. Acts as an assembly factor that specifically drives the homodimerization of CIV complexes, mediating the formation of mitochondrial respiratory supercomplexes (respirasomes) containing two CIV: supercomplxes with two molecules of CIV show improved activity. Despite being highly expressed in brown adipose tissue, not required for thermogenesis. This is Cytochrome c oxidase subunit 7A1, mitochondrial (COX7A1) from Bos taurus (Bovine).